Consider the following 483-residue polypeptide: Aspartyl/glutamyl-tRNA(Asn/Gln) amidotransferase subunit B (483 aa).

This sequence belongs to the GatB/GatE family. GatB subfamily. As to quaternary structure, heterotrimer of A, B and C subunits.

It carries out the reaction L-glutamyl-tRNA(Gln) + L-glutamine + ATP + H2O = L-glutaminyl-tRNA(Gln) + L-glutamate + ADP + phosphate + H(+). The catalysed reaction is L-aspartyl-tRNA(Asn) + L-glutamine + ATP + H2O = L-asparaginyl-tRNA(Asn) + L-glutamate + ADP + phosphate + 2 H(+). Allows the formation of correctly charged Asn-tRNA(Asn) or Gln-tRNA(Gln) through the transamidation of misacylated Asp-tRNA(Asn) or Glu-tRNA(Gln) in organisms which lack either or both of asparaginyl-tRNA or glutaminyl-tRNA synthetases. The reaction takes place in the presence of glutamine and ATP through an activated phospho-Asp-tRNA(Asn) or phospho-Glu-tRNA(Gln). The polypeptide is Aspartyl/glutamyl-tRNA(Asn/Gln) amidotransferase subunit B (Rickettsia felis (strain ATCC VR-1525 / URRWXCal2) (Rickettsia azadi)).